The following is a 398-amino-acid chain: LIM domain-binding protein 2 (398 aa).

Disordered stretches follow at residues Pro245 to Tyr280 and Asp354 to Gln398. Positions Ser263–Ala279 are enriched in low complexity. The 40-residue stretch at Asp323–Glu362 folds into the LIM interaction domain (LID) domain.

This sequence belongs to the LDB family. In terms of tissue distribution, expressed in adult brain, lung, spleen and kidney. Isoform b is generally expressed at a higher level than isoform a.

It is found in the nucleus. Binds to the LIM domain of a wide variety of LIM domain-containing transcription factors. The protein is LIM domain-binding protein 2 of Xenopus laevis (African clawed frog).